A 422-amino-acid polypeptide reads, in one-letter code: Probable ornithine aminotransferase, mitochondrial (422 aa).

At Lys273 the chain carries N6-(pyridoxal phosphate)lysine.

Belongs to the class-III pyridoxal-phosphate-dependent aminotransferase family. Pyridoxal 5'-phosphate is required as a cofactor.

The protein localises to the mitochondrion matrix. The enzyme catalyses a 2-oxocarboxylate + L-ornithine = L-glutamate 5-semialdehyde + an L-alpha-amino acid. It functions in the pathway amino-acid biosynthesis; L-proline biosynthesis; L-glutamate 5-semialdehyde from L-ornithine: step 1/1. The protein is Probable ornithine aminotransferase, mitochondrial of Caenorhabditis elegans.